A 146-amino-acid chain; its full sequence is Anti-sigma F factor (146 aa).

Belongs to the anti-sigma-factor family.

It catalyses the reaction L-seryl-[protein] + ATP = O-phospho-L-seryl-[protein] + ADP + H(+). It carries out the reaction L-threonyl-[protein] + ATP = O-phospho-L-threonyl-[protein] + ADP + H(+). Functionally, binds to sigma F and blocks its ability to form an RNA polymerase holoenzyme (E-sigma F). Phosphorylates SpoIIAA on a serine residue. This phosphorylation may enable SpoIIAA to act as an anti-anti-sigma factor that counteracts SpoIIAB and thus releases sigma F from inhibition. This chain is Anti-sigma F factor, found in Bacillus cytotoxicus (strain DSM 22905 / CIP 110041 / 391-98 / NVH 391-98).